We begin with the raw amino-acid sequence, 351 residues long: Soluble interferon alpha/beta receptor OPG204 (351 aa).

Residues 1–23 form the signal peptide; it reads MKMKMMVRIYFVSLSLLLFHSYA. 2 consecutive Ig-like C2-type domains span residues 65 to 137 and 155 to 237; these read LGEP…KNGD and PKTY…IVVS. 2 cysteine pairs are disulfide-bonded: C73–C129 and C172–C221. N-linked (GlcNAc...) asparagine; by host glycosylation is found at N117, N182, N261, N269, and N321. An Ig-like V-type domain is found at 246-345; the sequence is PSQDHRFKLI…HNYYFDKTLT (100 aa). The cysteines at positions 272 and 333 are disulfide-linked.

It belongs to the interleukin-1 receptor family. As to quaternary structure, interacts with host IFNA1.

It localises to the secreted. Its function is as follows. Counteracts the antiviral effects of host IFN-alpha/beta and key IFN-inducible proteins involved in viral RNA degradation suxh as host OAS1. Acts as a soluble IFN-alpha receptor and thus inhibits the interaction between host IFN-alpha and its receptor. The protein is Soluble interferon alpha/beta receptor OPG204 (OPG204) of Cynomys gunnisoni (Gunnison's prairie dog).